Here is a 451-residue protein sequence, read N- to C-terminus: NADP-specific glutamate dehydrogenase (451 aa).

The active site involves K114.

It belongs to the Glu/Leu/Phe/Val dehydrogenases family. As to quaternary structure, homohexamer.

The enzyme catalyses L-glutamate + NADP(+) + H2O = 2-oxoglutarate + NH4(+) + NADPH + H(+). In Fusarium fujikuroi (Bakanae and foot rot disease fungus), this protein is NADP-specific glutamate dehydrogenase (GDH2).